A 201-amino-acid polypeptide reads, in one-letter code: MARYTGPATRKSRRLRVDLVGGDMAFERRPYPPGQAGRARIKESEYLLQLQEKQKARFTYGVLEKQFRRYYAEANRLPGKTGDNLVILLESRLDNVVYRAGLARTRRQARQLVSHGHFTVNGKKINVPSYRVSQYDIIDVREKSQKMIWFEEAQENLLDAVVPAWLQVVPSTLRILVHQLPERAQIDVPLQEQLIVELYSK.

The region spanning 91–151 (SRLDNVVYRA…EKSQKMIWFE (61 aa)) is the S4 RNA-binding domain.

This sequence belongs to the universal ribosomal protein uS4 family. As to quaternary structure, part of the 30S ribosomal subunit. Contacts protein S5. The interaction surface between S4 and S5 is involved in control of translational fidelity.

Its function is as follows. One of the primary rRNA binding proteins, it binds directly to 16S rRNA where it nucleates assembly of the body of the 30S subunit. Functionally, with S5 and S12 plays an important role in translational accuracy. The protein is Small ribosomal subunit protein uS4 of Corynebacterium diphtheriae (strain ATCC 700971 / NCTC 13129 / Biotype gravis).